Reading from the N-terminus, the 929-residue chain is Ras guanine nucleotide exchange factor M (929 aa).

Residues 1–15 are compositionally biased toward polar residues; sequence MWQKPSLTKSMMNEV. Disordered stretches follow at residues 1 to 102 and 169 to 316; these read MWQK…AAGS and TNNN…SKSL. Positions 16 to 33 are enriched in low complexity; the sequence is SSNSPKSPTLTSSPSTQS. Gly residues predominate over residues 44–67; sequence LDGGGGGSNRLIFGGSGGGSGGGS. Low complexity-rich tracts occupy residues 68-80 and 169-191; these read LPSS…VNPF and TNNN…NNDG. Residues 192-202 are compositionally biased toward gly residues; the sequence is SGSGSGAGGSF. The segment covering 203–246 has biased composition (low complexity); sequence IGTTTSAKTTSTTSTSAATTTTTTTTSSSSSSPSSSSPSSTSPT. The span at 247 to 256 shows a compositional bias: polar residues; the sequence is IASNNDNNNK. A compositionally biased stretch (low complexity) spans 270 to 287; sequence PPLTLSQSQTQQQQQQKV. Over residues 295 to 305 the composition is skewed to polar residues; that stretch reads RFSTNSSGSQS. The N-terminal Ras-GEF domain maps to 390 to 528; sequence NKFVVVSGPK…PILDLYEKLK (139 aa). The tract at residues 540 to 583 is disordered; that stretch reads SLSGSGGISNNNNGSDLKNSNNGNNSSNNNNSSSNSSSSSSSSD. Residues 676–911 form the Ras-GEF domain; the sequence is SPQDIAKQLT…YAFSKFIESP (236 aa).

Functionally, promotes the exchange of Ras-bound GDP by GTP. The polypeptide is Ras guanine nucleotide exchange factor M (gefM) (Dictyostelium discoideum (Social amoeba)).